Reading from the N-terminus, the 120-residue chain is CLAVATA3/ESR (CLE)-related protein 9 (120 aa).

Positions 1–26 (MTMTHLNRLILISLLFVSLLLKSSTA) are cleaved as a signal peptide. An N-linked (GlcNAc...) asparagine glycan is attached at Asn-35. Residues 85–120 (RSSRKQPLLSPPPPEIDPRYGVDKRLVPSGPNPLHN) are disordered. Positions 100-110 (IDPRYGVDKRL) are enriched in basic and acidic residues. 2 positions are modified to hydroxyproline: Pro-112 and Pro-115. O-linked (Ara...) hydroxyproline glycosylation occurs at Pro-115.

The protein belongs to the CLV3/ESR signal peptide family. In terms of processing, the O-glycosylation (arabinosylation) of the hydroxyproline Pro-115 enhances binding affinity of the CLE9p peptide for its receptor. In terms of tissue distribution, mostly expressed in leaves, flowers, stems and apex, and, to a lower extent, in seedlings, roots, siliques and pollen.

The protein localises to the secreted. Its subcellular location is the extracellular space. Extracellular signal peptide that regulates cell fate. Represses root apical meristem maintenance. Regulates the transition of protophloem cells from proliferation to differentiation, thus impinging on postembryonic growth capacity of the root meristem; this signaling pathway requires CRN and CLV2. The chain is CLAVATA3/ESR (CLE)-related protein 9 from Arabidopsis thaliana (Mouse-ear cress).